Reading from the N-terminus, the 265-residue chain is 3-methyl-2-oxobutanoate hydroxymethyltransferase (265 aa).

Positions 46 and 85 each coordinate Mg(2+). Residues 46 to 47, Asp85, and Lys114 contribute to the 3-methyl-2-oxobutanoate site; that span reads DS. Glu116 lines the Mg(2+) pocket. Glu183 (proton acceptor) is an active-site residue.

It belongs to the PanB family. In terms of assembly, homodecamer; pentamer of dimers. Mg(2+) serves as cofactor.

It localises to the cytoplasm. It catalyses the reaction 3-methyl-2-oxobutanoate + (6R)-5,10-methylene-5,6,7,8-tetrahydrofolate + H2O = 2-dehydropantoate + (6S)-5,6,7,8-tetrahydrofolate. The protein operates within cofactor biosynthesis; coenzyme A biosynthesis. Functionally, catalyzes the reversible reaction in which hydroxymethyl group from 5,10-methylenetetrahydrofolate is transferred onto alpha-ketoisovalerate to form ketopantoate. In Pyrobaculum calidifontis (strain DSM 21063 / JCM 11548 / VA1), this protein is 3-methyl-2-oxobutanoate hydroxymethyltransferase.